The following is a 147-amino-acid chain: Hemoglobin subunit beta-2 (147 aa).

Residues 3-147 (EWTDSERAII…VVSALGRQYH (145 aa)) form the Globin domain. H64 and H93 together coordinate heme b.

It belongs to the globin family. In terms of assembly, hb 3 is a heterotetramer of two alpha-2 and two beta-2 chains. As to expression, red blood cells.

In terms of biological role, involved in oxygen transport from gills to the various peripheral tissues. This Arctogadus glacialis (Arctic cod) protein is Hemoglobin subunit beta-2 (hbb2).